A 77-amino-acid chain; its full sequence is UPF0401 protein c3666 (77 aa).

Belongs to the UPF0401 family.

The chain is UPF0401 protein c3666 from Escherichia coli O6:H1 (strain CFT073 / ATCC 700928 / UPEC).